The sequence spans 264 residues: NFAT activation molecule 1 (264 aa).

Residues methionine 1–glutamine 37 form the signal peptide. Over leucine 38 to alanine 159 the chain is Extracellular. In terms of domain architecture, Ig-like V-type spans leucine 49–arginine 145. The cysteines at positions 64 and 110 are disulfide-linked. Asparagine 105 and asparagine 118 each carry an N-linked (GlcNAc...) asparagine glycan. Residues leucine 160 to leucine 180 form a helical membrane-spanning segment. Residues tryptophan 181–leucine 264 lie on the Cytoplasmic side of the membrane. The 21-residue stretch at glutamate 212 to glutamate 232 folds into the ITAM domain. 2 positions are modified to phosphotyrosine: tyrosine 215 and tyrosine 226.

No direct interaction with the B-cell antigen receptor (BCR). Interacts with SYK; probably involved in BCR signaling. Interacts with ZAP70. In terms of processing, N-glycosylated. In terms of tissue distribution, highly expressed in the spleen, expressed by both B- and CD4+ and CD8+ T-cells, as well as non-T- and non-B-cells, including macrophages and neutrophils. Expressed at low levels, if any, in non-immune tissue.

It localises to the cell membrane. Functionally, may function in immune system as a receptor which activates via the calcineurin/NFAT-signaling pathway the downstream cytokine gene promoters. Activates the transcription of IL-13 and TNF-alpha promoters. May be involved in the regulation of B-cell, but not T-cell, development. This Mus musculus (Mouse) protein is NFAT activation molecule 1 (Nfam1).